The following is a 100-amino-acid chain: Small ribosomal subunit protein uS14c (100 aa).

The protein belongs to the universal ribosomal protein uS14 family. In terms of assembly, part of the 30S ribosomal subunit.

It localises to the plastid. The protein resides in the chloroplast. Binds 16S rRNA, required for the assembly of 30S particles. This chain is Small ribosomal subunit protein uS14c, found in Populus alba (White poplar).